Reading from the N-terminus, the 360-residue chain is UDP-N-acetylglucosamine--N-acetylmuramyl-(pentapeptide) pyrophosphoryl-undecaprenol N-acetylglucosamine transferase (360 aa).

UDP-N-acetyl-alpha-D-glucosamine contacts are provided by residues 12–14, Ser198, and Gln289; that span reads TAG.

The protein belongs to the glycosyltransferase 28 family. MurG subfamily.

It is found in the cell membrane. The catalysed reaction is Mur2Ac(oyl-L-Ala-gamma-D-Glu-L-Lys-D-Ala-D-Ala)-di-trans,octa-cis-undecaprenyl diphosphate + UDP-N-acetyl-alpha-D-glucosamine = beta-D-GlcNAc-(1-&gt;4)-Mur2Ac(oyl-L-Ala-gamma-D-Glu-L-Lys-D-Ala-D-Ala)-di-trans,octa-cis-undecaprenyl diphosphate + UDP + H(+). The protein operates within cell wall biogenesis; peptidoglycan biosynthesis. Cell wall formation. Catalyzes the transfer of a GlcNAc subunit on undecaprenyl-pyrophosphoryl-MurNAc-pentapeptide (lipid intermediate I) to form undecaprenyl-pyrophosphoryl-MurNAc-(pentapeptide)GlcNAc (lipid intermediate II). This is UDP-N-acetylglucosamine--N-acetylmuramyl-(pentapeptide) pyrophosphoryl-undecaprenol N-acetylglucosamine transferase from Streptococcus equi subsp. zooepidemicus (strain H70).